The following is a 263-amino-acid chain: MPEGPEIRRAADNLEAAIKGKPLTDVWFAFPQLKSYQSRLIGQHVTHVETRGKALLTHFSNDLTLYSHNQLYGVWRVVDTGEEPQTTRVLRVKLQTADKTILLYSASDIEMLTPEQLTTHPFLQRVGPDVLDPNLTPEVVKERLLSPRFRNRQFAGLLLDQAFLAGLGNYLRVEILWQVGLTGNHKAKDLNAAQLDALAHALLDTPRLSYATRGQVDENKYHGALFRFKVFHRDGEPCERCGGIIEKTTLSSRPFYWCPGCQH.

Proline 2 acts as the Schiff-base intermediate with DNA in catalysis. Glutamate 3 acts as the Proton donor in catalysis. The active-site Proton donor; for beta-elimination activity is the lysine 53. Residues glutamine 70, arginine 125, and asparagine 169 each coordinate DNA. The FPG-type zinc finger occupies 229 to 263; sequence KVFHRDGEPCERCGGIIEKTTLSSRPFYWCPGCQH. The Proton donor; for delta-elimination activity role is filled by arginine 253.

This sequence belongs to the FPG family. Zn(2+) is required as a cofactor.

It carries out the reaction 2'-deoxyribonucleotide-(2'-deoxyribose 5'-phosphate)-2'-deoxyribonucleotide-DNA = a 3'-end 2'-deoxyribonucleotide-(2,3-dehydro-2,3-deoxyribose 5'-phosphate)-DNA + a 5'-end 5'-phospho-2'-deoxyribonucleoside-DNA + H(+). In terms of biological role, involved in base excision repair of DNA damaged by oxidation or by mutagenic agents. Acts as a DNA glycosylase that recognizes and removes damaged bases. Has a preference for oxidized pyrimidines, such as thymine glycol, 5,6-dihydrouracil and 5,6-dihydrothymine. Has AP (apurinic/apyrimidinic) lyase activity and introduces nicks in the DNA strand. Cleaves the DNA backbone by beta-delta elimination to generate a single-strand break at the site of the removed base with both 3'- and 5'-phosphates. This is Endonuclease 8 from Escherichia coli (strain UTI89 / UPEC).